The following is a 432-amino-acid chain: Tol-Pal system protein TolB (432 aa).

The N-terminal stretch at 1–21 (MKHVRIFATLLALLVISVTPA) is a signal peptide.

The protein belongs to the TolB family. The Tol-Pal system is composed of five core proteins: the inner membrane proteins TolA, TolQ and TolR, the periplasmic protein TolB and the outer membrane protein Pal. They form a network linking the inner and outer membranes and the peptidoglycan layer.

The protein localises to the periplasm. Part of the Tol-Pal system, which plays a role in outer membrane invagination during cell division and is important for maintaining outer membrane integrity. In Geobacter sulfurreducens (strain ATCC 51573 / DSM 12127 / PCA), this protein is Tol-Pal system protein TolB.